The chain runs to 47 residues: IPYGGNGVHHGKAGDSXTVDTAIGNIGNNAASIIGGMISGWASGLAG.

It belongs to the bacteriocin class IIA/YGNGV family.

The protein resides in the secreted. Its function is as follows. Has bactericidal activity against various Gram-negative Campylobacter, and the Gram-positive L.monocytogenes and B.subtilis. In vitro, inhibits C.jejuni strain ATCC 33560 (MIC=27.3 ug/ml). The polypeptide is Bacteriocin curvaticin DN317 (Latilactobacillus curvatus (Lactobacillus curvatus)).